A 2038-amino-acid chain; its full sequence is Fer-1-like protein 5 (2038 aa).

C2 domains follow at residues 1–100 (MLRV…MFVR), 145–265 (TQKK…TLLR), 307–424 (QNTR…QGMY), 1055–1186 (TPED…FTPL), 1225–1345 (IPCK…SLNY), 1467–1587 (PKPP…ARCG), and 1705–1853 (GPPG…KQCS). Asp1502, Asp1508, Asp1557, Phe1558, Asp1559, Asp1565, Asp1824, Ser1827, and Asp1830 together coordinate Ca(2+). The chain crosses the membrane as a helical span at residues 1961–1981 (IICLVVTLVIGFILLNFVYSA).

It belongs to the ferlin family. Interacts (via second C2 domain) with EHD1 and EHD2. Ca(2+) is required as a cofactor. Expressed in differentiating myoblasts and myotubes.

The protein localises to the cell membrane. Its subcellular location is the membrane. Functionally, plays a role in myoblast fusion; probable mediator of endocytic recycling for membrane trafficking events during myotube formation. The protein is Fer-1-like protein 5 (Fer1l5) of Mus musculus (Mouse).